The sequence spans 694 residues: Putative ankyrin repeat protein RBE_0921 (694 aa).

ANK repeat units follow at residues 122-151 (LGKT…NINV), 155-185 (NGRN…NINS), 216-245 (FNRT…NVEA), 249-275 (TGET…NTEA), 279-317 (LGRT…NPNA), 321-350 (YGFT…KFKK), 351-382 (NRYE…NIND), 384-413 (NGQN…DNGK), 423-452 (QRNT…DINA), and 456-485 (DGET…DINI).

The sequence is that of Putative ankyrin repeat protein RBE_0921 from Rickettsia bellii (strain RML369-C).